A 159-amino-acid polypeptide reads, in one-letter code: Ribosome maturation factor RimP (159 aa).

The protein belongs to the RimP family.

Its subcellular location is the cytoplasm. Its function is as follows. Required for maturation of 30S ribosomal subunits. This Geotalea daltonii (strain DSM 22248 / JCM 15807 / FRC-32) (Geobacter daltonii) protein is Ribosome maturation factor RimP.